Consider the following 1203-residue polypeptide: Exonuclease/helicase subunit RexA (1203 aa).

Residues 4–472 (VKLTPEQNEA…IRLKENFRSR (469 aa)) form the UvrD-like helicase ATP-binding domain. An ATP-binding site is contributed by 25 to 32 (ASAGSGKT). The 283-residue stretch at 503 to 785 (VQGNISDYPV…RVMTFHKSKG (283 aa)) folds into the UvrD-like helicase C-terminal domain.

This sequence belongs to the helicase family. AddA subfamily. As to quaternary structure, heterodimer of RexA (AddA) and RexB. Requires Mg(2+) as cofactor.

The catalysed reaction is Couples ATP hydrolysis with the unwinding of duplex DNA by translocating in the 3'-5' direction.. The enzyme catalyses ATP + H2O = ADP + phosphate + H(+). Functionally, the heterodimer acts both as an ATP-dependent DNA helicase and an ATP-dependent, dual-direction single-stranded exonuclease. Recognizes the L.lactis chi site (5'-GCGCGTG-3'), which stimulates homologous recombination. The RexA (AddA) nuclease domain is required for chi fragment generation; this subunit has 3'-&gt;5' exonuclease activity and probably also performs the helicase function. In Lactococcus lactis subsp. cremoris (strain MG1363), this protein is Exonuclease/helicase subunit RexA.